The primary structure comprises 145 residues: Large ribosomal subunit protein uL11 (145 aa).

It belongs to the universal ribosomal protein uL11 family. In terms of assembly, part of the ribosomal stalk of the 50S ribosomal subunit. Interacts with L10 and the large rRNA to form the base of the stalk. L10 forms an elongated spine to which L12 dimers bind in a sequential fashion forming a multimeric L10(L12)X complex. Post-translationally, one or more lysine residues are methylated.

Functionally, forms part of the ribosomal stalk which helps the ribosome interact with GTP-bound translation factors. The protein is Large ribosomal subunit protein uL11 of Rickettsia peacockii (strain Rustic).